Reading from the N-terminus, the 53-residue chain is Serine rich endogenous peptide 3 (53 aa).

A signal peptide spans 1 to 26; the sequence is MTKKGPLNLRLLLLLLVVLLPSCSNC. An SCOOP motif motif is present at residues 37-53; it reads SSEWRRKMITVWSKSSY. The short motif at 49 to 51 is the SxS motif essential for MIK2 binding element; the sequence is SKS.

The protein belongs to the serine rich endogenous peptide (SCOOP) phytocytokine family. Interacts with MIK2 (via extracellular leucine-rich repeat domain); this interaction triggers the formation of complex between MIK2 and the BAK1/SERK3 and SERK4 coreceptors, and subsequent BAK1 activation by phosphorylation.

Its subcellular location is the cell membrane. The protein localises to the secreted. It localises to the extracellular space. It is found in the apoplast. Functionally, brassicaceae-specific phytocytokine (plant endogenous peptide released into the apoplast) perceived by MIK2 in a BAK1/SERK3 and SERK4 coreceptors-dependent manner, that modulates various physiological and antimicrobial processes including growth prevention and reactive oxygen species (ROS) response regulation. The polypeptide is Serine rich endogenous peptide 3 (Arabidopsis thaliana (Mouse-ear cress)).